Reading from the N-terminus, the 183-residue chain is Negative modulator of initiation of replication (183 aa).

Residues 90-91 form an interaction with DNA region; it reads AV.

The protein belongs to the SeqA family. As to quaternary structure, homodimer. Polymerizes to form helical filaments.

Its subcellular location is the cytoplasm. Its function is as follows. Negative regulator of replication initiation, which contributes to regulation of DNA replication and ensures that replication initiation occurs exactly once per chromosome per cell cycle. Binds to pairs of hemimethylated GATC sequences in the oriC region, thus preventing assembly of replication proteins and re-initiation at newly replicated origins. Repression is relieved when the region becomes fully methylated. The protein is Negative modulator of initiation of replication of Shewanella oneidensis (strain ATCC 700550 / JCM 31522 / CIP 106686 / LMG 19005 / NCIMB 14063 / MR-1).